The primary structure comprises 285 residues: Cytosolic Fe-S cluster assembly factor CFD1 (285 aa).

Position 30–37 (30–37 (GKGGVGKS)) interacts with ATP. Residues Cys-206 and Cys-209 each coordinate [4Fe-4S] cluster.

It belongs to the Mrp/NBP35 ATP-binding proteins family. NUBP2/CFD1 subfamily. Heterotetramer of 2 NBP35 and 2 CFD1 chains. It depends on [4Fe-4S] cluster as a cofactor.

The protein localises to the cytoplasm. Its function is as follows. Component of the cytosolic iron-sulfur (Fe/S) protein assembly (CIA) machinery. Required for maturation of extramitochondrial Fe-S proteins. The NBP35-CFD1 heterotetramer forms a Fe-S scaffold complex, mediating the de novo assembly of an Fe-S cluster and its transfer to target apoproteins. Required for biogenesis and export of both ribosomal subunits, which may reflect a role in assembly of the Fe/S clusters in RLI1, a protein which performs rRNA processing and ribosome export. The polypeptide is Cytosolic Fe-S cluster assembly factor CFD1 (Candida glabrata (strain ATCC 2001 / BCRC 20586 / JCM 3761 / NBRC 0622 / NRRL Y-65 / CBS 138) (Yeast)).